The following is a 289-amino-acid chain: 4-diphosphocytidyl-2-C-methyl-D-erythritol kinase (289 aa).

Residue Lys11 is part of the active site. 93–103 (PLAAGLAGGSA) is an ATP binding site. Asp135 is an active-site residue.

It belongs to the GHMP kinase family. IspE subfamily.

The catalysed reaction is 4-CDP-2-C-methyl-D-erythritol + ATP = 4-CDP-2-C-methyl-D-erythritol 2-phosphate + ADP + H(+). The protein operates within isoprenoid biosynthesis; isopentenyl diphosphate biosynthesis via DXP pathway; isopentenyl diphosphate from 1-deoxy-D-xylulose 5-phosphate: step 3/6. Functionally, catalyzes the phosphorylation of the position 2 hydroxy group of 4-diphosphocytidyl-2C-methyl-D-erythritol. The sequence is that of 4-diphosphocytidyl-2-C-methyl-D-erythritol kinase from Thermoanaerobacter pseudethanolicus (strain ATCC 33223 / 39E) (Clostridium thermohydrosulfuricum).